Consider the following 87-residue polypeptide: UPF0250 protein BUAPTUC7_482 (87 aa).

This sequence belongs to the UPF0250 family.

The sequence is that of UPF0250 protein BUAPTUC7_482 from Buchnera aphidicola subsp. Acyrthosiphon pisum (strain Tuc7).